The following is a 49-amino-acid chain: Delta-actitoxin-Axm1h (49 aa).

3 cysteine pairs are disulfide-bonded: cysteine 4/cysteine 46, cysteine 6/cysteine 36, and cysteine 29/cysteine 47.

Belongs to the sea anemone sodium channel inhibitory toxin family. Type I subfamily.

The protein resides in the secreted. The protein localises to the nematocyst. Binds specifically to voltage-gated sodium channels (Nav) (site 3), thereby delaying their inactivation during signal transduction. Thus it may strongly stimulate mammalian cardiac muscle contraction. The protein is Delta-actitoxin-Axm1h of Anthopleura xanthogrammica (Giant green sea anemone).